The chain runs to 255 residues: Imidazole glycerol phosphate synthase subunit HisF (255 aa).

Active-site residues include D11 and D130.

The protein belongs to the HisA/HisF family. As to quaternary structure, heterodimer of HisH and HisF.

Its subcellular location is the cytoplasm. It carries out the reaction 5-[(5-phospho-1-deoxy-D-ribulos-1-ylimino)methylamino]-1-(5-phospho-beta-D-ribosyl)imidazole-4-carboxamide + L-glutamine = D-erythro-1-(imidazol-4-yl)glycerol 3-phosphate + 5-amino-1-(5-phospho-beta-D-ribosyl)imidazole-4-carboxamide + L-glutamate + H(+). The protein operates within amino-acid biosynthesis; L-histidine biosynthesis; L-histidine from 5-phospho-alpha-D-ribose 1-diphosphate: step 5/9. Its function is as follows. IGPS catalyzes the conversion of PRFAR and glutamine to IGP, AICAR and glutamate. The HisF subunit catalyzes the cyclization activity that produces IGP and AICAR from PRFAR using the ammonia provided by the HisH subunit. The chain is Imidazole glycerol phosphate synthase subunit HisF from Exiguobacterium sp. (strain ATCC BAA-1283 / AT1b).